The primary structure comprises 177 residues: ATP synthase subunit delta (177 aa).

It belongs to the ATPase delta chain family. As to quaternary structure, F-type ATPases have 2 components, F(1) - the catalytic core - and F(0) - the membrane proton channel. F(1) has five subunits: alpha(3), beta(3), gamma(1), delta(1), epsilon(1). F(0) has three main subunits: a(1), b(2) and c(10-14). The alpha and beta chains form an alternating ring which encloses part of the gamma chain. F(1) is attached to F(0) by a central stalk formed by the gamma and epsilon chains, while a peripheral stalk is formed by the delta and b chains.

The protein localises to the cell inner membrane. Functionally, f(1)F(0) ATP synthase produces ATP from ADP in the presence of a proton or sodium gradient. F-type ATPases consist of two structural domains, F(1) containing the extramembraneous catalytic core and F(0) containing the membrane proton channel, linked together by a central stalk and a peripheral stalk. During catalysis, ATP synthesis in the catalytic domain of F(1) is coupled via a rotary mechanism of the central stalk subunits to proton translocation. Its function is as follows. This protein is part of the stalk that links CF(0) to CF(1). It either transmits conformational changes from CF(0) to CF(1) or is implicated in proton conduction. In Shewanella loihica (strain ATCC BAA-1088 / PV-4), this protein is ATP synthase subunit delta.